A 545-amino-acid chain; its full sequence is Glucans biosynthesis protein G (545 aa).

Residues 1 to 34 (MVSLLRCQSFKPSSSLICSLALSAAFALSSSAFA) form the signal peptide. Positions 38–60 (KPAENKPATPVVSPPKATAQPAN) are disordered.

It belongs to the OpgD/OpgG family.

It is found in the periplasm. Its pathway is glycan metabolism; osmoregulated periplasmic glucan (OPG) biosynthesis. In terms of biological role, involved in the biosynthesis of osmoregulated periplasmic glucans (OPGs). The polypeptide is Glucans biosynthesis protein G (Shewanella sp. (strain ANA-3)).